A 185-amino-acid polypeptide reads, in one-letter code: Neuronal vesicle trafficking-associated protein 1 (185 aa).

Over 1–82 the chain is Cytoplasmic; that stretch reads MVKLGNNFAE…ITEGVTERFK (82 aa). A helical; Signal-anchor for type II membrane protein membrane pass occupies residues 83–103; that stretch reads VSVLVLFALAFLTCVVFLVVY. Topologically, residues 104-185 are lumenal; it reads KVYKYDRACP…QETEAAEKSA (82 aa). Residues 129–164 are required for GRIP1 interaction; that stretch reads ESYYTEQDSSAREKFYTVINHYNVAKQSITRSVSPW.

Belongs to the NSG family. In terms of assembly, forms a complex with GRIP1, GRIA2 and STX12 through direct interaction with GRIP1; controls the intracellular fate of AMPAR and the endosomal sorting of the GRIA2 subunit toward recycling and membrane targeting. Interacts with STX12. Interacts with APP; could regulate APP processing. Interacts with FAM171A1. In terms of tissue distribution, pituitary and less in adrenal gland and testis. Expressed in the hippocampus throughout development. At P0, highly and broadly expressed throughout the cortical plate, but is down-regulated overall at P8 and P14, but remains relatively enriched in layer V. At P0 is expressed ubiquitously in the developing cerebellum namely Purkinje neurons as well as granule neurons. However, it becomes restricted to Purkinje cells by P8. This exclusive expression in Purkinje cells is maintained throughout adulthood.

The protein resides in the membrane. Its subcellular location is the golgi apparatus. It localises to the trans-Golgi network membrane. It is found in the endosome membrane. The protein localises to the cell projection. The protein resides in the dendrite. Its subcellular location is the early endosome membrane. It localises to the late endosome membrane. It is found in the lysosome lumen. The protein localises to the recycling endosome membrane. The protein resides in the cytoplasmic vesicle membrane. Its subcellular location is the golgi stack membrane. It localises to the endosome. It is found in the multivesicular body membrane. The protein localises to the endoplasmic reticulum membrane. In terms of biological role, plays a role in the recycling mechanism in neurons of multiple receptors, including AMPAR, APP and L1CAM and acts at the level of early endosomes to promote sorting of receptors toward a recycling pathway. Regulates sorting and recycling of GRIA2 through interaction with GRIP1 and then contributes to the regulation of synaptic transmission and plasticity by affecting the recycling and targeting of AMPA receptors to the synapse. Is required for faithful sorting of L1CAM to axons by facilitating trafficking from somatodendritic early endosome or the recycling endosome. In an other hand, induces apoptosis via the activation of CASP3 in response to DNA damage. The chain is Neuronal vesicle trafficking-associated protein 1 from Mus musculus (Mouse).